We begin with the raw amino-acid sequence, 531 residues long: MEPPSEPEPEPQPLAEASAAAPLRAPEVARLREEQEKVVTNCQEKIQHWEKVDNDYSALQERLRTLPDKLSYDVMVPFGPLAFMPGKLVHTNEVTVLLGDNWFAKCSAKQAVGLVEHRKEHVRKTIDDFKKVLKNFESRVEFTEDLQKMSDAAGDFVDIREEIKSDFEFKGKQRIAHKPHSKPKTSDIFEADFENGVKPKNTFDADELWARLEELERQEELLGELESKPDTVIANGEDRVSSEEEKEGADTGVNVVSPVTDSSAASSCKRRAGNAGLPNGQVNSLNYSVNGSNSYHSNKDDDEEEEDDDDDDDEDDDNESDHAISADNSIPTIYFSHTVEPKRVRINTGKNTTLKFSEKKEEAKRKRKSGAGSHATHELPAIKSPADIYRVFVDVVNGEYVPRKSILKSRSRENSVCSDTSESSAADVEDRRGLLRSTSSEEAVATEAGGSSLDELQENHPKKPLPSGVSEAFSGTVIEKEFLSPSLAPYSAIAHHALPTIPERKEVPSEVSEEPTKRVSKFRAARLQQRS.

Position 1 is an N-acetylmethionine (M1). 4 disordered regions span residues 1–24 (MEPPSEPEPEPQPLAEASAAAPLR), 224–381 (ELES…ELPA), 408–470 (KSRS…SGVS), and 500–531 (TIPERKEVPSEVSEEPTKRVSKFRAARLQQRS). Low complexity predominate over residues 13–24 (PLAEASAAAPLR). 2 stretches are compositionally biased toward polar residues: residues 257 to 266 (SPVTDSSAAS) and 280 to 296 (GQVNSLNYSVNGSNSYH). Positions 300 to 319 (DDDEEEEDDDDDDDEDDDNE) are enriched in acidic residues. A Phosphoserine; by RPS6KB1 modification is found at S369. A compositionally biased stretch (polar residues) spans 414 to 424 (NSVCSDTSESS). S439 is modified (phosphoserine).

This sequence belongs to the RNA polymerase II subunit 5-mediating protein family. Homodimer. Component of the PAQosome complex which is responsible for the biogenesis of several protein complexes and which consists of R2TP complex members RUVBL1, RUVBL2, RPAP3 and PIH1D1, URI complex members PFDN2, PFDN6, PDRG1, UXT and URI1 as well as ASDURF, POLR2E and DNAAF10/WDR92. Interacts with POLR2E/RPB5, RUVBL2 and RUVBL1. Interacts with PFDN2, PFDN4 and STAP1; the interactions are phosphorylation-dependent and occur in a growth-dependent manner in the mitochondrion. Interacts with UXT. Interacts with PPP1CC; the interaction is phosphorylation-dependent and occurs in a growth factor-dependent manner. Interacts (via the middle C-terminal region) with GTF2F1 and GTF2F2. Interacts with DMAP1. Interacts with TSC1 and TSC2. Interacts with PRPF8 and EFTUD2 in a ZNHIT2-dependent manner. Phosphorylation occurs in response to androgen treatment in prostate cancer cells in a mTOR-dependent manner. Phosphorylated; hyperhosphorylated in mitochondria in a mTORC-dependent signaling pathway. Phosphorylated at Ser-369 by RPS6KB1 in a growth factor- and rapamycin-dependent manner. S6K1-mediated mitochondrial phosphorylation at Ser-369 disrupts the URI1-PPP1CC complex in the mitochondrion, relieves PPP1CC phosphatase inhibition activity and hence engages a negative feedback diminishing RPS6KB1 kinase activity, preventing sustained S6K1-dependent signaling. Phosphorylated. Phosphorylation occurs essentially on serine residues. Expressed in the spinal cord, ganglia, choroid plexus and olfactors epithelium of the developing brain. Expressed in skin, lung, kidney, testis and muscles (at protein level). Expressed strongly in brain and kidney. Expressed weakly in skeletal muscle, lung and liver.

The protein localises to the nucleus. It is found in the cytoplasm. It localises to the mitochondrion. The protein resides in the cell projection. Its subcellular location is the dendrite. In terms of biological role, involved in gene transcription regulation. Acts as a transcriptional repressor in concert with the corepressor UXT to regulate androgen receptor (AR) transcription. May act as a tumor suppressor to repress AR-mediated gene transcription and to inhibit anchorage-independent growth in prostate cancer cells. Required for cell survival in ovarian cancer cells. Together with UXT, associates with chromatin to the NKX3-1 promoter region. Its function is as follows. Plays a central role in maintaining S6K1 signaling and BAD phosphorylation under normal growth conditions thereby protecting cells from potential deleterious effects of sustained S6K1 signaling. The URI1-PPP1CC complex acts as a central component of a negative feedback mechanism that counteracts excessive S6K1 survival signaling to BAD in response to growth factors. Mediates inhibition of PPP1CC phosphatase activity in mitochondria. Coordinates the regulation of nutrient-sensitive gene expression availability in a mTOR-dependent manner. Seems to be a scaffolding protein able to assemble a prefoldin-like complex that contains PFDs and proteins with roles in transcription and ubiquitination. The protein is Unconventional prefoldin RPB5 interactor (Uri1) of Mus musculus (Mouse).